A 166-amino-acid polypeptide reads, in one-letter code: Protein TIFY 11e (166 aa).

A Tify domain is found at Ala65–Ser100. The Jas signature appears at Pro123–Tyr148. Residues Ala125–Arg132 carry the Nuclear localization signal motif.

The protein belongs to the TIFY/JAZ family. Post-translationally, ubiquitinated. Targeted for degradation by the SCF(COI1) E3 ubiquitin ligase-proteasome pathway during jasmonate signaling.

It is found in the nucleus. Functionally, repressor of jasmonate responses. The chain is Protein TIFY 11e from Oryza sativa subsp. japonica (Rice).